Reading from the N-terminus, the 262-residue chain is Nodulation protein J (262 aa).

Residues 33–259 form the ABC transmembrane type-2 domain; it reads ASLLGHLAEP…FLSTALLRRR (227 aa). The next 6 helical transmembrane spans lie at 35–55, 60–80, 125–145, 148–168, 177–197, and 231–251; these read LLGH…GLGV, VGGV…SAMT, AALA…TQWL, LYAL…GMVV, YFIF…GAVF, and VVDV…PFFL.

Belongs to the ABC-2 integral membrane protein family. Lipooligosaccharide exporter (TC 3.A.1.102) subfamily. As to quaternary structure, the complex is composed of two ATP-binding proteins (NodI) and two transmembrane proteins (NodJ).

The protein resides in the cell inner membrane. Part of the ABC transporter complex NodIJ involved in the export of the nodulation factors (Nod factors), the bacterial signal molecules that induce symbiosis and subsequent nodulation induction. Nod factors are LCO (lipo-chitin oligosaccharide), a modified beta-1,4-linked N-acetylglucosamine oligosaccharide. This subunit encodes the transporter. The protein is Nodulation protein J (nodJ) of Rhizobium leguminosarum bv. trifolii.